We begin with the raw amino-acid sequence, 74 residues long: Antimicrobial peptide 1 (74 aa).

The signal sequence occupies residues 1–22 (MEIKYLLTVFLVLLIGSDYCQA). A Lysine amide modification is found at Lys-40. Residues 46-74 (DLDGQIDRSRNFRKRDAELEELLSKLPIY) constitute a propeptide that is removed on maturation.

As to expression, expressed by the venom gland.

The protein localises to the secreted. It is found in the target cell membrane. Its function is as follows. Has antibacterial activity against the Gram-positive bacteria S.aureus (MIC=20 uM), the Gram-negative bacteria E.coli (MIC=150 uM), and the yeast C.albicans (MIC=64 uM). Causes hemolysis on horse erythrocytes. This chain is Antimicrobial peptide 1, found in Androctonus amoreuxi (African fattail scorpion).